The chain runs to 127 residues: Large ribosomal subunit protein bL12c (127 aa).

Residues 104-127 (GVAKDAAEEAKKQIEDAGGKASLK) form a disordered region. Residues 105-121 (VAKDAAEEAKKQIEDAG) are compositionally biased toward basic and acidic residues.

This sequence belongs to the bacterial ribosomal protein bL12 family. As to quaternary structure, homodimer. Part of the ribosomal stalk of the 50S ribosomal subunit. Forms a multimeric L10(L12)X complex, where L10 forms an elongated spine to which 2 to 4 L12 dimers bind in a sequential fashion. Binds GTP-bound translation factors.

It localises to the plastid. It is found in the chloroplast. Its function is as follows. Forms part of the ribosomal stalk which helps the ribosome interact with GTP-bound translation factors. Is thus essential for accurate translation. The polypeptide is Large ribosomal subunit protein bL12c (Trieres chinensis (Marine centric diatom)).